Consider the following 313-residue polypeptide: Biotin synthase (313 aa).

One can recognise a Radical SAM core domain in the interval 28–258 (NFGNDIELCS…LFPQARLRLS (231 aa)). [4Fe-4S] cluster-binding residues include C46, C50, and C53. C90, C121, C181, and R256 together coordinate [2Fe-2S] cluster.

Belongs to the radical SAM superfamily. Biotin synthase family. As to quaternary structure, homodimer. [4Fe-4S] cluster serves as cofactor. [2Fe-2S] cluster is required as a cofactor.

The catalysed reaction is (4R,5S)-dethiobiotin + (sulfur carrier)-SH + 2 reduced [2Fe-2S]-[ferredoxin] + 2 S-adenosyl-L-methionine = (sulfur carrier)-H + biotin + 2 5'-deoxyadenosine + 2 L-methionine + 2 oxidized [2Fe-2S]-[ferredoxin]. It functions in the pathway cofactor biosynthesis; biotin biosynthesis; biotin from 7,8-diaminononanoate: step 2/2. In terms of biological role, catalyzes the conversion of dethiobiotin (DTB) to biotin by the insertion of a sulfur atom into dethiobiotin via a radical-based mechanism. This is Biotin synthase from Francisella tularensis subsp. tularensis (strain FSC 198).